A 255-amino-acid polypeptide reads, in one-letter code: Ribonuclease HII (255 aa).

The RNase H type-2 domain occupies 58–247 (RYIAGIDEAG…VKSMVLGARY (190 aa)). A divalent metal cation contacts are provided by D64, E65, and D156.

Belongs to the RNase HII family. Mn(2+) serves as cofactor. It depends on Mg(2+) as a cofactor.

Its subcellular location is the cytoplasm. It catalyses the reaction Endonucleolytic cleavage to 5'-phosphomonoester.. Endonuclease that specifically degrades the RNA of RNA-DNA hybrids. This is Ribonuclease HII from Syntrophomonas wolfei subsp. wolfei (strain DSM 2245B / Goettingen).